The following is a 476-amino-acid chain: Protein transport protein Sec61 subunit alpha isoform 2 (476 aa).

At 1–33 (MGIKFLEVIKPFCAVLPEIQKPERKIQFREKVL) the chain is on the cytoplasmic side. A helical transmembrane segment spans residues 34–53 (WTAITLFIFLVCCQIPLFGI). Residues 54–76 (MSSDSADPFYWMRVILASNRGTL) lie on the Lumenal side of the membrane. Residues 77-96 (MELGISPIVTSGLIMQLLAG) traverse the membrane as a helical segment. Residues 97 to 117 (AKIIEVGDTPKDRALFNGAQK) lie on the Cytoplasmic side of the membrane. The helical transmembrane segment at 118–138 (LFGMIITIGQAIVYVMTGMYG) threads the bilayer. The Lumenal segment spans residues 139-144 (DPAEMG). A helical membrane pass occupies residues 145–165 (AGICLLIIIQLFVAGLIVLLL). At 166–172 (DELLQKG) the chain is on the cytoplasmic side. A helical transmembrane segment spans residues 173–193 (YGLGSGISLFIATNICETIVW). Residues 194–240 (KAFSPTTINTGRGTEFEGAVIALFHLLATRTDKVRALREAFYRQNLP) are Lumenal-facing. The helical transmembrane segment at 241–261 (NLMNLIATVFVFAVVIYFQGF) threads the bilayer. The Cytoplasmic segment spans residues 262-288 (RVDLPIKSARYRGQYSSYPIKLFYTSN). Residues 289 to 309 (IPIILQSALVSNLYVISQMLS) form a helical membrane-spanning segment. The Lumenal portion of the chain corresponds to 310-354 (VRFSGNFLVNLLGQWADVSGGGPARSYPVGGLCYYLSPPESMGAI). The helical transmembrane segment at 355–375 (FEDPVHVVVYIIFMLGSCAFF) threads the bilayer. Topologically, residues 376-420 (SKTWIEVSGSSAKDVAKQLKEQQMVMRGHRDTSMVHELNRYIPTA) are cytoplasmic. The helical transmembrane segment at 421 to 441 (AAFGGLCIGALSVLADFLGAI) threads the bilayer. At 442 to 445 (GSGT) the chain is on the lumenal side. A helical transmembrane segment spans residues 446–462 (GILLAVTIIYQYFEIFV). The Cytoplasmic segment spans residues 463–476 (KEQAEVGGMGALFF).

It belongs to the SecY/SEC61-alpha family. The SEC61 channel-forming translocon complex consists of channel-forming core components SEC61A1, SEC61B and SEC61G and different auxiliary components such as SEC62 and SEC63.

The protein resides in the endoplasmic reticulum membrane. In terms of biological role, component of SEC61 channel-forming translocon complex that mediates transport of signal peptide-containing precursor polypeptides across the endoplasmic reticulum (ER). Forms a ribosome receptor and a gated pore in the ER membrane, both functions required for cotranslational translocation of nascent polypeptides. This is Protein transport protein Sec61 subunit alpha isoform 2 (SEC61A2) from Homo sapiens (Human).